A 178-amino-acid chain; its full sequence is Ribosome maturation factor RimM (178 aa).

The PRC barrel domain occupies 93–170 (EGSYYYHELR…ALTADAPAGL (78 aa)).

It belongs to the RimM family. In terms of assembly, binds ribosomal protein uS19.

Its subcellular location is the cytoplasm. Functionally, an accessory protein needed during the final step in the assembly of 30S ribosomal subunit, possibly for assembly of the head region. Essential for efficient processing of 16S rRNA. May be needed both before and after RbfA during the maturation of 16S rRNA. It has affinity for free ribosomal 30S subunits but not for 70S ribosomes. This is Ribosome maturation factor RimM from Deinococcus geothermalis (strain DSM 11300 / CIP 105573 / AG-3a).